The sequence spans 472 residues: uncharacterized protein (472 aa).

2 stretches are compositionally biased toward low complexity: residues 1–21 (MAFS…SRPG) and 63–74 (ASSLPAPASSSP). A disordered region spans residues 1-74 (MAFSSSSLRR…SLPAPASSSP (74 aa)).

This is an uncharacterized protein from Equus caballus (Horse).